A 218-amino-acid polypeptide reads, in one-letter code: Cytochrome b6 (218 aa).

Residues 35–55 (IFYCLGGITLVCFLIQFATGF) form a helical membrane-spanning segment. Position 38 (Cys-38) interacts with heme c. 2 residues coordinate heme b: His-89 and His-103. 3 consecutive transmembrane segments (helical) span residues 93 to 113 (ASMMVLMLILHVFRVYLTGGF), 119 to 139 (LTWVTGVVMAVITVAFGVTGY), and 189 to 209 (LHTFVLPWTLAVFMLMHFLMI). Heme b-binding residues include His-190 and His-205.

The protein belongs to the cytochrome b family. PetB subfamily. In terms of assembly, the 4 large subunits of the cytochrome b6-f complex are cytochrome b6, subunit IV (17 kDa polypeptide, PetD), cytochrome f and the Rieske protein, while the 4 small subunits are PetG, PetL, PetM and PetN. The complex functions as a dimer. Heme b serves as cofactor. Requires heme c as cofactor.

It is found in the cellular thylakoid membrane. In terms of biological role, component of the cytochrome b6-f complex, which mediates electron transfer between photosystem II (PSII) and photosystem I (PSI), cyclic electron flow around PSI, and state transitions. The sequence is that of Cytochrome b6 from Prochlorococcus marinus (strain MIT 9211).